A 249-amino-acid chain; its full sequence is uncharacterized protein (249 aa).

This is an uncharacterized protein from Colorado tick fever virus (strain USA/Florio N-7180) (CTFV).